The following is a 38-amino-acid chain: MTQSNPNEQNVELNRTSLYWGLLLIFVLAILFSNYFFN.

A helical transmembrane segment spans residues 17–37 (SLYWGLLLIFVLAILFSNYFF).

It belongs to the PsbL family. In terms of assembly, PSII is composed of 1 copy each of membrane proteins PsbA, PsbB, PsbC, PsbD, PsbE, PsbF, PsbH, PsbI, PsbJ, PsbK, PsbL, PsbM, PsbT, PsbX, PsbY, PsbZ, Psb30/Ycf12, at least 3 peripheral proteins of the oxygen-evolving complex and a large number of cofactors. It forms dimeric complexes.

The protein resides in the plastid. The protein localises to the chloroplast thylakoid membrane. One of the components of the core complex of photosystem II (PSII). PSII is a light-driven water:plastoquinone oxidoreductase that uses light energy to abstract electrons from H(2)O, generating O(2) and a proton gradient subsequently used for ATP formation. It consists of a core antenna complex that captures photons, and an electron transfer chain that converts photonic excitation into a charge separation. This subunit is found at the monomer-monomer interface and is required for correct PSII assembly and/or dimerization. This chain is Photosystem II reaction center protein L, found in Aethionema cordifolium (Lebanon stonecress).